Here is a 147-residue protein sequence, read N- to C-terminus: uncharacterized protein (147 aa).

The region spanning Met1–Ser59 is the Response regulatory domain. An HTH luxR-type domain is found at Arg78–Gly143. Residues Asn102 to Leu121 constitute a DNA-binding region (H-T-H motif).

Post-translationally, overexpressed protein is phosphorylated in vitro by non-cognate histidine kinases BarA and UhpB.

This is an uncharacterized protein from Escherichia coli (strain K12).